The following is a 379-amino-acid chain: Chaperone protein DnaJ (379 aa).

The J domain maps to 5–70; that stretch reads DYYELLEVSR…QKRAAYDQFG (66 aa). The CR-type zinc-finger motif lies at 135–213; the sequence is GKEVEITVPR…CHGQGRVRES (79 aa). Zn(2+) contacts are provided by cysteine 148, cysteine 151, cysteine 165, cysteine 168, cysteine 187, cysteine 190, cysteine 201, and cysteine 204. CXXCXGXG motif repeat units lie at residues 148 to 155, 165 to 172, 187 to 194, and 201 to 208; these read CTVCEGSG, CETCQGMG, CPTCHGEG, and CASCHGQG.

This sequence belongs to the DnaJ family. In terms of assembly, homodimer. It depends on Zn(2+) as a cofactor.

It localises to the cytoplasm. Functionally, participates actively in the response to hyperosmotic and heat shock by preventing the aggregation of stress-denatured proteins and by disaggregating proteins, also in an autonomous, DnaK-independent fashion. Unfolded proteins bind initially to DnaJ; upon interaction with the DnaJ-bound protein, DnaK hydrolyzes its bound ATP, resulting in the formation of a stable complex. GrpE releases ADP from DnaK; ATP binding to DnaK triggers the release of the substrate protein, thus completing the reaction cycle. Several rounds of ATP-dependent interactions between DnaJ, DnaK and GrpE are required for fully efficient folding. Also involved, together with DnaK and GrpE, in the DNA replication of plasmids through activation of initiation proteins. This Legionella pneumophila (strain Lens) protein is Chaperone protein DnaJ.